Reading from the N-terminus, the 271-residue chain is D-methionine-binding lipoprotein MetQ (271 aa).

The signal sequence occupies residues 1–22; it reads MAFKFKTFAAVGALIGSLALVG. The N-palmitoyl cysteine moiety is linked to residue Cys-23. A lipid anchor (S-diacylglycerol cysteine) is attached at Cys-23.

It belongs to the NlpA lipoprotein family.

It is found in the cell membrane. This protein is a component of a D-methionine permease, a binding protein-dependent, ATP-driven transport system. In Escherichia coli (strain K12), this protein is D-methionine-binding lipoprotein MetQ (metQ).